A 645-amino-acid chain; its full sequence is Putative galactocerebrosidase (645 aa).

A signal peptide spans 1–16 (MFSIFIKIILILPSIA). Substrate is bound by residues T87 and W128. N141 carries N-linked (GlcNAc...) asparagine glycosylation. N171 contributes to the substrate binding site. E172 serves as the catalytic Proton donor/acceptor. N-linked (GlcNAc...) asparagine glycosylation is found at N174 and N193. E248 functions as the Nucleophile in the catalytic mechanism. Cysteines 261 and 365 form a disulfide. N-linked (GlcNAc...) asparagine glycans are attached at residues N274, N395, N411, N532, N616, N620, and N638.

It belongs to the glycosyl hydrolase 59 family.

It catalyses the reaction a beta-D-Gal-(1&lt;-&gt;1')-ceramide + H2O = an N-acyl-sphingoid base + D-galactose. The enzyme catalyses a beta-D-galactosyl-(1&lt;-&gt;1')-N-acylsphing-4-enine + H2O = an N-acylsphing-4-enine + D-galactose. Functionally, hydrolyzes the galactose ester bonds of galactosylceramide, galactosylsphingoid base, lactosylceramide, and monogalactosyldiglyceride. C.elegans contain specific sphingoid bases, which are unique or different in structure compared to the sphingoid bases found in other animals. Two examples of these distinctive compounds are: 15-methylhexadecasphinganine and 15-methylhexadecasphing-4-enine. This chain is Putative galactocerebrosidase, found in Caenorhabditis elegans.